An 895-amino-acid polypeptide reads, in one-letter code: Protein translocase subunit SecA (895 aa).

ATP-binding positions include Q86, 104 to 108 (GEGKT), and D494. Composition is skewed to low complexity over residues 838–849 (AAATPPGFGAPP) and 870–882 (GDAA…TGNR). A disordered region spans residues 838–895 (AAATPPGFGAPPVRQQLQYSAPTAEGDVEVHAGDAAATDADTGNRAQRRANQRQQREV).

The protein belongs to the SecA family. As to quaternary structure, monomer and homodimer. Part of the essential Sec protein translocation apparatus which comprises SecA, SecYEG and auxiliary proteins SecDF. Other proteins may also be involved.

It localises to the cell membrane. The protein localises to the cytoplasm. It carries out the reaction ATP + H2O + cellular proteinSide 1 = ADP + phosphate + cellular proteinSide 2.. In terms of biological role, part of the Sec protein translocase complex. Interacts with the SecYEG preprotein conducting channel. Has a central role in coupling the hydrolysis of ATP to the transfer of proteins into and across the cell membrane, serving as an ATP-driven molecular motor driving the stepwise translocation of polypeptide chains across the membrane. The protein is Protein translocase subunit SecA of Kineococcus radiotolerans (strain ATCC BAA-149 / DSM 14245 / SRS30216).